A 239-amino-acid chain; its full sequence is Large ribosomal subunit protein uL3 (239 aa).

Disordered stretches follow at residues 140–164 and 211–239; these read SHRS…KMPG and PLPK…QEGA. Glutamine 151 is subject to N5-methylglutamine.

It belongs to the universal ribosomal protein uL3 family. In terms of assembly, part of the 50S ribosomal subunit. Forms a cluster with proteins L14 and L19. Methylated by PrmB.

In terms of biological role, one of the primary rRNA binding proteins, it binds directly near the 3'-end of the 23S rRNA, where it nucleates assembly of the 50S subunit. In Bradyrhizobium sp. (strain ORS 278), this protein is Large ribosomal subunit protein uL3.